The chain runs to 583 residues: CD166 antigen (583 aa).

The first 27 residues, 1-27, serve as a signal peptide directing secretion; sequence MASKGSPSCRLVFCLLISAAVLRPGLG. Ig-like V-type domains follow at residues 28-120 and 125-234; these read WYTV…TEDN and PTLV…KTIY. The Extracellular segment spans residues 28 to 527; sequence WYTVNSAYGD…NREKVNDQAK (500 aa). Disulfide bonds link cysteine 43/cysteine 113 and cysteine 157/cysteine 220. N-linked (GlcNAc...) asparagine glycans are attached at residues asparagine 95, asparagine 167, asparagine 265, asparagine 306, asparagine 361, asparagine 457, asparagine 480, and asparagine 499. Ig-like C2-type domains follow at residues 245–328, 333–409, and 416–501; these read PTEQ…TTIT, DLSL…ESLT, and PQIK…LNVS. 3 disulfide bridges follow: cysteine 270/cysteine 313, cysteine 354/cysteine 392, and cysteine 435/cysteine 485. Residues 528–549 form a helical membrane-spanning segment; the sequence is LIVGIVVGLLLAALVAGVVYWL. Residues 550-583 are Cytoplasmic-facing; that stretch reads YMKKSKTASKHVNKDLGNMEENKKLEENNHKTEA. A disordered region spans residues 562-583; the sequence is NKDLGNMEENKKLEENNHKTEA. The span at 569–583 shows a compositional bias: basic and acidic residues; the sequence is EENKKLEENNHKTEA.

Homodimer. Interacts (via extracellular domain) with CD6 (via extracellular domain). Homodimerization and interaction with CD6 involve the same region and cannot occur simultaneously. The affinity for CD6 is much higher than the affinity for self-association. Interacts (via glycosylated extracellular domain) with LGALS1 and LGALS3. Interaction with LGALS1 or LGALS3 inhibits interaction with CD6. Post-translationally, the N-terminus is blocked. Glycosylated. In terms of tissue distribution, strongest expression in the lung, then brain, liver, and kidney. Present in the somatosensory system, basal ganglia, cortex, olfactory system, and circumventricular organs.

It is found in the cell membrane. The protein localises to the cell projection. Its subcellular location is the axon. It localises to the dendrite. In terms of biological role, cell adhesion molecule that mediates both heterotypic cell-cell contacts via its interaction with CD6, as well as homotypic cell-cell contacts. Promotes T-cell activation and proliferation via its interactions with CD6. Contributes to the formation and maturation of the immunological synapse via its interactions with CD6. Mediates homotypic interactions with cells that express ALCAM. Mediates attachment of dendritic cells onto endothelial cells via homotypic interaction. Inhibits endothelial cell migration and promotes endothelial tube formation via homotypic interactions. Required for normal organization of the lymph vessel network. Required for normal hematopoietic stem cell engraftment in the bone marrow. Plays a role in hematopoiesis; required for normal numbers of hematopoietic stem cells in bone marrow. Promotes in vitro osteoblast proliferation and differentiation. Promotes neurite extension, axon growth and axon guidance; axons grow preferentially on surfaces that contain ALCAM. Mediates outgrowth and pathfinding for retinal ganglion cell axons. This chain is CD166 antigen (Alcam), found in Rattus norvegicus (Rat).